The following is a 320-amino-acid chain: Cytochrome c biogenesis protein CcsA (320 aa).

8 helical membrane-spanning segments follow: residues 14–34 (SFFL…YINI), 37–57 (ITIL…TFLL), 68–88 (LSNL…IHLI), 97–117 (WLGI…TLSL), 143–163 (MMLS…ILII), 228–248 (VISL…VWAN), 263–283 (WALI…IKGW), and 289–309 (AIIA…VNLL).

It belongs to the CcmF/CycK/Ccl1/NrfE/CcsA family. In terms of assembly, may interact with Ccs1.

The protein localises to the plastid. Its subcellular location is the chloroplast thylakoid membrane. Functionally, required during biogenesis of c-type cytochromes (cytochrome c6 and cytochrome f) at the step of heme attachment. This is Cytochrome c biogenesis protein CcsA from Marchantia polymorpha (Common liverwort).